The primary structure comprises 364 residues: Putative [LysW]-aminoadipate semialdehyde/glutamate semialdehyde transaminase (364 aa).

Pyridoxal 5'-phosphate contacts are provided by residues 90–91 (GT) and F117. Substrate is bound at residue R120. 202–205 (DEVQ) lines the pyridoxal 5'-phosphate pocket. K230 is subject to N6-(pyridoxal phosphate)lysine. S254 contributes to the substrate binding site. Position 255 (T255) interacts with pyridoxal 5'-phosphate.

This sequence belongs to the class-III pyridoxal-phosphate-dependent aminotransferase family. LysJ subfamily. In terms of assembly, homodimer. Pyridoxal 5'-phosphate is required as a cofactor.

It localises to the cytoplasm. The catalysed reaction is [amino-group carrier protein]-C-terminal-gamma-(L-lysyl)-L-glutamate + 2-oxoglutarate = [amino-group carrier protein]-C-terminal-N-(1-carboxy-5-oxopentan-1-yl)-L-glutamine + L-glutamate. It catalyses the reaction [amino-group carrier protein]-C-terminal-gamma-(L-ornithyl)-L-glutamate + 2-oxoglutarate = [amino-group carrier protein]-C-terminal-gamma-(L-glutamyl-5-semialdehyde)-L-glutamate + L-glutamate. The protein operates within amino-acid biosynthesis; L-lysine biosynthesis via AAA pathway; L-lysine from L-alpha-aminoadipate (Thermus route): step 4/5. It participates in amino-acid biosynthesis; L-arginine biosynthesis. In terms of biological role, involved in both the arginine and lysine biosynthetic pathways. The polypeptide is Putative [LysW]-aminoadipate semialdehyde/glutamate semialdehyde transaminase (Pyrococcus abyssi (strain GE5 / Orsay)).